The sequence spans 384 residues: Terpene cyclase ascI (384 aa).

The signal sequence occupies residues 1–25; the sequence is MPQLAGKLILAGLIPLGAWVLHGFA. The helical transmembrane segment at 82–102 threads the bilayer; the sequence is LSLHAFMFAGQGVPLLVLNML. Residue asparagine 109 is glycosylated (N-linked (GlcNAc...) asparagine). Transmembrane regions (helical) follow at residues 119 to 139, 164 to 184, 194 to 214, and 235 to 255; these read VFGI…YLFL, AVGF…SLPH, VLSV…AYFA, and GAVY…TFAI. N-linked (GlcNAc...) asparagine glycosylation occurs at asparagine 258. Transmembrane regions (helical) follow at residues 291–311 and 330–350; these read WFLQ…AIGI and IALR…ALSL. An N-linked (GlcNAc...) asparagine glycan is attached at asparagine 372.

This sequence belongs to the membrane-bound ascI terpene cyclase family.

It localises to the membrane. It carries out the reaction 16-hydroxy-ilicicolin A epoxide = ascofuranol. Its pathway is secondary metabolite biosynthesis; terpenoid biosynthesis. In terms of biological role, epoxide hydrolase; part of the asc-2 gene cluster that mediates the biosynthesis of ascofuranone, a strong inhibitor of cyanide-insensitive alternative oxidases and a promising drug candidate against African trypanosomiasis. The first step in the pathway is performed by the non-reducing polyketide synthase ascC that produces orsellinic acid by condensing acetyl-CoA with 3 malonyl-CoA units. Orsellinic acid is then prenylated by the prenyltransferase ascA to yield ilicicolinic acid B. Ilicicolinic acid B is further reduced to ilicicolin B by the reductase ascB. The halogenase ascD then chlorinates ilicicolin B to produce ilicicolin A which is converted to ilicicolin A epoxide by the cytochrome P450 monooxygenase ascE that catalyzes stereoselective epoxidation of the terminal double bond of the prenyl group. Ilicicolin A epoxide is the last common precursor for the biosynthesis of ascofuranone and ascochlorin. The terpene cyclase ascF produces a monocyclic terpene, and the cyclization reaction is proposed to be initiated by protonation of the terminal epoxide of ilicicolin A epoxide to generate a monocyclic tertiarycation, which is followed by a series of hydride and methyl shifts with abstraction of proton, leading to the formation of the (14S,15R,19R)-trimethylcyclohexanone ring structure of ilicicolin C, which is finally reduced to ascochlorin by the dehydrogenase ascG. On the other hand, ilicicolin A epoxide is hydroxylated by the cytochrome P450 monooxygenase ascH, and the resultant product is cyclized by the terpene cyclase ascI to ascofuranol via protonation-initiated epoxide ring opening, which facilitates the 6-endo-tet cyclization to form the tetrahy-drofuran ring. Finally, ascofuranol is oxidized into ascofuranone by ascJ. This is Terpene cyclase ascI from Acremonium egyptiacum (Oospora egyptiaca).